We begin with the raw amino-acid sequence, 93 residues long: Small ribosomal subunit protein bS18 (93 aa).

The protein belongs to the bacterial ribosomal protein bS18 family. As to quaternary structure, part of the 30S ribosomal subunit. Forms a tight heterodimer with protein bS6.

In terms of biological role, binds as a heterodimer with protein bS6 to the central domain of the 16S rRNA, where it helps stabilize the platform of the 30S subunit. The protein is Small ribosomal subunit protein bS18 of Paracidovorax citrulli (strain AAC00-1) (Acidovorax citrulli).